Here is a 533-residue protein sequence, read N- to C-terminus: CTP synthase (533 aa).

Positions 1-269 (MKKNLKILVI…HEILSSKLNI (269 aa)) are amidoligase domain. CTP is bound at residue S16. S16 contributes to the UTP binding site. ATP contacts are provided by residues 17–22 (GIGKGV) and D73. Positions 73 and 143 each coordinate Mg(2+). CTP contacts are provided by residues 150–152 (DME), 190–195 (KSKPTQ), and K226. Residues 190 to 195 (KSKPTQ) and K226 each bind UTP. The region spanning 304-533 (YAELDDSYAS…LFLGLIKACI (230 aa)) is the Glutamine amidotransferase type-1 domain. G355 is a binding site for L-glutamine. The active-site Nucleophile; for glutamine hydrolysis is the C382. L-glutamine contacts are provided by residues 383–386 (LGLQ), E406, and R466. Residues H511 and E513 contribute to the active site.

It belongs to the CTP synthase family. Homotetramer.

It catalyses the reaction UTP + L-glutamine + ATP + H2O = CTP + L-glutamate + ADP + phosphate + 2 H(+). The enzyme catalyses L-glutamine + H2O = L-glutamate + NH4(+). It carries out the reaction UTP + NH4(+) + ATP = CTP + ADP + phosphate + 2 H(+). The protein operates within pyrimidine metabolism; CTP biosynthesis via de novo pathway; CTP from UDP: step 2/2. Allosterically activated by GTP, when glutamine is the substrate; GTP has no effect on the reaction when ammonia is the substrate. The allosteric effector GTP functions by stabilizing the protein conformation that binds the tetrahedral intermediate(s) formed during glutamine hydrolysis. Inhibited by the product CTP, via allosteric rather than competitive inhibition. Its function is as follows. Catalyzes the ATP-dependent amination of UTP to CTP with either L-glutamine or ammonia as the source of nitrogen. Regulates intracellular CTP levels through interactions with the four ribonucleotide triphosphates. The sequence is that of CTP synthase from Borreliella burgdorferi (strain ATCC 35210 / DSM 4680 / CIP 102532 / B31) (Borrelia burgdorferi).